A 597-amino-acid chain; its full sequence is Dynein intermediate chain 3, ciliary (597 aa).

7 WD repeats span residues 159–210 (EIKR…KPEF), 213–253 (KPVS…QAVE), 260–301 (SHHD…EPTE), 314–354 (ENAQ…PPEK), 361–400 (EHIG…SSIM), 404–444 (YHMS…KDPT), and 449–488 (VSDD…CTMQ). 2 disordered regions span residues 512–546 (RQRE…VAAA) and 562–597 (AAQQ…EKEG). Over residues 528-542 (QDDDEEGGPDEEEDL) the composition is skewed to acidic residues. Over residues 584–597 (GSEKKDTENGEKEG) the composition is skewed to basic and acidic residues.

The protein belongs to the dynein intermediate chain family. In terms of assembly, consists of at least two heavy chains (alpha and beta), three intermediate chains and several light chains.

The protein resides in the cytoplasm. The protein localises to the cytoskeleton. It is found in the cilium axoneme. Functionally, may play a role in the regulation of dynein heavy chain activity. The polypeptide is Dynein intermediate chain 3, ciliary (Heliocidaris crassispina (Sea urchin)).